A 237-amino-acid chain; its full sequence is NAD(P)H-hydrate epimerase (237 aa).

In terms of domain architecture, YjeF N-terminal spans 11-223; sequence AASLDRDLMN…GLDIPEYPGV (213 aa). Residue 61-65 coordinates (6S)-NADPHX; it reads NNGGD. Asparagine 62 and aspartate 123 together coordinate K(+). (6S)-NADPHX-binding positions include 127–133 and aspartate 156; that span reads GFSFSGP. Serine 159 is a K(+) binding site.

It belongs to the NnrE/AIBP family. The cofactor is K(+).

The protein localises to the cytoplasm. Its subcellular location is the mitochondrion. The catalysed reaction is (6R)-NADHX = (6S)-NADHX. The enzyme catalyses (6R)-NADPHX = (6S)-NADPHX. In terms of biological role, catalyzes the epimerization of the S- and R-forms of NAD(P)HX, a damaged form of NAD(P)H that is a result of enzymatic or heat-dependent hydration. This is a prerequisite for the S-specific NAD(P)H-hydrate dehydratase to allow the repair of both epimers of NAD(P)HX. The protein is NAD(P)H-hydrate epimerase of Ajellomyces capsulatus (strain G186AR / H82 / ATCC MYA-2454 / RMSCC 2432) (Darling's disease fungus).